We begin with the raw amino-acid sequence, 201 residues long: Glycerol-3-phosphate acyltransferase (201 aa).

5 helical membrane passes run 3–23 (LFAI…SAIL), 53–73 (WVAL…VWLG), 80–100 (HFEL…PIFF), 115–135 (IAPI…LIFF), and 153–175 (FYVW…LLIY).

Belongs to the PlsY family. Probably interacts with PlsX.

The protein localises to the cell inner membrane. The enzyme catalyses an acyl phosphate + sn-glycerol 3-phosphate = a 1-acyl-sn-glycero-3-phosphate + phosphate. It participates in lipid metabolism; phospholipid metabolism. Its function is as follows. Catalyzes the transfer of an acyl group from acyl-phosphate (acyl-PO(4)) to glycerol-3-phosphate (G3P) to form lysophosphatidic acid (LPA). This enzyme utilizes acyl-phosphate as fatty acyl donor, but not acyl-CoA or acyl-ACP. The polypeptide is Glycerol-3-phosphate acyltransferase (Pasteurella multocida (strain Pm70)).